The following is a 589-amino-acid chain: Intermediate filament protein ifb-1 (589 aa).

The interval 1-42 (MSSHKESSEYEMQYRSTIQPRTAVRSQSRQSGNYVSGGNGAG) is disordered. Residues 8–84 (SEYEMQYRST…LEATDKEKKT (77 aa)) form a head region. Residues 14–30 (YRSTIQPRTAVRSQSRQ) show a composition bias toward polar residues. Residues 81–433 (EKKTLQGLND…KMLEGEETRV (353 aa)) enclose the IF rod domain. Residues 85-116 (LQGLNDRLGNYIDRVKKLEEQNRKLVADLDEL) are coil 1A. The linker 1 stretch occupies residues 117–130 (RGKWGKDTSEIKIK). The coil 1B stretch occupies residues 131-268 (YSESLSTARK…RVHEQEVKEL (138 aa)). Positions 269–285 (QALLAQAPADTREFFKN) are linker 12. A coil 2 region spans residues 286–433 (ELALAIRDIK…KMLEGEETRV (148 aa)). Positions 434-588 (GLTQMVEQAV…THTQKTIQSG (155 aa)) are tail. The tract at residues 444 to 470 (KTHSLQQQENTDSTRSVRGEVSTKTTF) is disordered. One can recognise an LTD domain in the interval 466–584 (TKTTFQRSAK…EERATHTQKT (119 aa)).

It belongs to the intermediate filament family. As to quaternary structure, forms some heteromeric filaments with ifa-1, ifa-2, ifa-3 and probably ifa-4. In terms of tissue distribution, expressed in epidermal cells. Expressed in amphid sensory neurons, the excretory cells, the vulva, the uterus, the rectum and some neurons of the tail. Isoform a and isoform b display a similar pattern of expression. Isoform a is predominant in pharyngeal tonofilaments.

The protein localises to the cytoplasm. Cytoplasmic intermediate filaments provide mechanical strength to cells. Essential protein, involved in attachment structures in epidermal cells that connect muscles to the external cuticle. Required in morphogenesis and epidermal integrity. Probable component of embryonic epidermal attachment structures. Functions in larval muscle attachment independently of ifa-2. The protein is Intermediate filament protein ifb-1 (ifb-1) of Caenorhabditis elegans.